The sequence spans 1035 residues: MSGSYPFIDIAALDSVREGFARGDAQLVLAHDLSTVLWVNGPGAKLFGYNRVEDLIEGQLDLPVATRRQIAAFSSENTSAPSAVAVRLGGGLRSELTHLHVSNIKLPDGVAALLVATQMPDNSAEAAISGLGDDSTHIALVDTVGKVVAASPRFALLDISASTLEDLIVEAGDATDRIVKRRIRTGSHSVPGAIARLTDTPALHLLCIVGDAPAQFQTAAEAVPLPDNAEAVLEEILPEQGDAPAQQAQKTHAEQPRPKTFAFDHDAPPARFIWKVGPDGTFSEISPDLAAVVGPNSADIVGRRFSDVANVFGFYTDGSIAALLLERDTWSGKRLLWPVEGTRLRVPVELAALPVYSRDREFLGFRGFGIVRPAEAEADPEEIGLALAGGIPQNRKPRKEPAETARMVGEDDVLALSEEVANDDQPAAVLPKPPLDITPTPGRRDSDKVISLLNSCAQEKVAADQAKFLKEKERATRPEGGLTKTERNAFREIAERLRKQGLANTRAESETPVSETSSIEPVEPTPPVKTRSEPIQPDETALLANLPVPVIIHSGDAIHYVNQALLDITGYESLDDIRSAGGVDVLFNSESDDGETRQSMVLRHADGSEEPVDTHLNAIAWRGGRALMLSLMPVTAADLPAPAELPAANDEEKQALEAHVEELKTILDTATDGVVLIDPEGRIRSMNHSASALFGYERDEAEGKFFSMLFAIESQRAAMDYLHGLSGNGVLSVLNDGREVIGREAKGGFIPLFMTIGKLPHTRGFCAVLRDITQWKRTEEELTNARKEAERASNQKTEFLARISHEIRTPLNAIIGFSELMADEKFGPIGNDRYRDYLRDINRSGNHVLALVNDLLDISKIEAGALDMQFEAVSLNDAIGEAIALMQPQANRERVIIRSSFQSNLPDIVADSRSIKQVALNLLSNAVRFTAPGGQVIVSTSYELNGDVVMRVRDTGIGMSKSEVEQALKPFRQINALEGRKAESAKDWRNEGTGLGLPLTKAMVEANRAQFAIDSNPGQGTVVEIVFPPTRVLAD.

The segment at 1–613 (MSGSYPFIDI…HADGSEEPVD (613 aa)) is important for polar localization. Residues 500-533 (QGLANTRAESETPVSETSSIEPVEPTPPVKTRSE) form a disordered region. The interval 614–1035 (THLNAIAWRG…VFPPTRVLAD (422 aa)) is interaction with DivK. The region spanning 659–730 (HVEELKTILD…YLHGLSGNGV (72 aa)) is the PAS domain. In terms of domain architecture, Histidine kinase spans 802-1031 (RISHEIRTPL…VVEIVFPPTR (230 aa)). Position 805 is a phosphohistidine; by autocatalysis (His-805).

Interacts with DivK.

The protein resides in the cytoplasm. It catalyses the reaction ATP + protein L-histidine = ADP + protein N-phospho-L-histidine.. Its function is as follows. Functions as a polar differentiation marker. Essential protein that, by localizing in the old pole of dividing cells, controls cell division and maturation, probably through control of DivK phosphorylation status and cellular distribution, which in turn regulates CtrA, a transcriptional regulator of the minB operon. The asymmetrical localization of this protein is probably required for cells to enter a new division cycle. The protein is Cell-division control histidine kinase PdhS (pdhS) of Brucella suis (strain ATCC 23445 / NCTC 10510).